A 463-amino-acid chain; its full sequence is ATP-dependent protease ATPase subunit HslU (463 aa).

Residues Val19, 61-66, Asp277, Glu341, and Arg413 each bind ATP; that span reads GVGKTE.

It belongs to the ClpX chaperone family. HslU subfamily. As to quaternary structure, a double ring-shaped homohexamer of HslV is capped on each side by a ring-shaped HslU homohexamer. The assembly of the HslU/HslV complex is dependent on binding of ATP.

The protein resides in the cytoplasm. ATPase subunit of a proteasome-like degradation complex; this subunit has chaperone activity. The binding of ATP and its subsequent hydrolysis by HslU are essential for unfolding of protein substrates subsequently hydrolyzed by HslV. HslU recognizes the N-terminal part of its protein substrates and unfolds these before they are guided to HslV for hydrolysis. This Shouchella clausii (strain KSM-K16) (Alkalihalobacillus clausii) protein is ATP-dependent protease ATPase subunit HslU.